The sequence spans 268 residues: Tryptophan synthase alpha chain (268 aa).

Residues E49 and D60 each act as proton acceptor in the active site.

Belongs to the TrpA family. Tetramer of two alpha and two beta chains.

It catalyses the reaction (1S,2R)-1-C-(indol-3-yl)glycerol 3-phosphate + L-serine = D-glyceraldehyde 3-phosphate + L-tryptophan + H2O. Its pathway is amino-acid biosynthesis; L-tryptophan biosynthesis; L-tryptophan from chorismate: step 5/5. Its function is as follows. The alpha subunit is responsible for the aldol cleavage of indoleglycerol phosphate to indole and glyceraldehyde 3-phosphate. The polypeptide is Tryptophan synthase alpha chain (Aliivibrio fischeri (strain MJ11) (Vibrio fischeri)).